A 349-amino-acid chain; its full sequence is Aminomethyltransferase (349 aa).

The protein belongs to the GcvT family. The glycine cleavage system is composed of four proteins: P, T, L and H.

It catalyses the reaction N(6)-[(R)-S(8)-aminomethyldihydrolipoyl]-L-lysyl-[protein] + (6S)-5,6,7,8-tetrahydrofolate = N(6)-[(R)-dihydrolipoyl]-L-lysyl-[protein] + (6R)-5,10-methylene-5,6,7,8-tetrahydrofolate + NH4(+). Functionally, the glycine cleavage system catalyzes the degradation of glycine. The protein is Aminomethyltransferase of Thermus thermophilus (strain ATCC BAA-163 / DSM 7039 / HB27).